The chain runs to 319 residues: ATP-dependent 6-phosphofructokinase (319 aa).

Residue Gly-11 coordinates ATP. ADP is bound at residue 21-25; it reads RAVVR. ATP-binding positions include 72 to 73 and 102 to 105; these read RC and GDGS. Residue Asp-103 participates in Mg(2+) binding. 125-127 is a binding site for substrate; that stretch reads TID. The active-site Proton acceptor is Asp-127. Arg-154 serves as a coordination point for ADP. Substrate-binding positions include Arg-162 and 169–171; that span reads MGR. ADP-binding positions include 185 to 187, Arg-211, and 213 to 215; these read GAE and KKH. Substrate is bound by residues Glu-222, Arg-243, and 249–252; that span reads HVQR.

It belongs to the phosphofructokinase type A (PFKA) family. ATP-dependent PFK group I subfamily. Prokaryotic clade 'B1' sub-subfamily. As to quaternary structure, homotetramer. The cofactor is Mg(2+).

The protein resides in the cytoplasm. The enzyme catalyses beta-D-fructose 6-phosphate + ATP = beta-D-fructose 1,6-bisphosphate + ADP + H(+). The protein operates within carbohydrate degradation; glycolysis; D-glyceraldehyde 3-phosphate and glycerone phosphate from D-glucose: step 3/4. Its activity is regulated as follows. Allosterically activated by ADP and other diphosphonucleosides, and allosterically inhibited by phosphoenolpyruvate. In terms of biological role, catalyzes the phosphorylation of D-fructose 6-phosphate to fructose 1,6-bisphosphate by ATP, the first committing step of glycolysis. The sequence is that of ATP-dependent 6-phosphofructokinase from Bacillus cytotoxicus (strain DSM 22905 / CIP 110041 / 391-98 / NVH 391-98).